A 496-amino-acid polypeptide reads, in one-letter code: Fatty acyl-CoA reductase 8 (496 aa).

Belongs to the fatty acyl-CoA reductase family.

It catalyses the reaction a long-chain fatty acyl-CoA + 2 NADPH + 2 H(+) = a long-chain primary fatty alcohol + 2 NADP(+) + CoA. Its function is as follows. Catalyzes the reduction of fatty acyl-CoA to fatty alcohols. Catalyzes specifically the formation of C16:0 fatty alcohol. This is Fatty acyl-CoA reductase 8 (FAR8) from Arabidopsis thaliana (Mouse-ear cress).